Consider the following 664-residue polypeptide: E3 ubiquitin-protein ligase RNF139 (664 aa).

N-acetylalanine is present on Ala2. The next 12 membrane-spanning stretches (helical) occupy residues 51–71 (IVLQ…VLIL), 85–105 (AFLL…HIDF), 125–145 (SLWM…VTLL), 154–174 (LIIL…PLHI), 178–198 (LLFT…AVKL), 293–313 (GMSA…LAFI), 323–343 (LGFV…LSGL), 356–376 (MCLL…PVLM), 390–410 (FPVL…SYVL), 420–440 (LFAV…SLTV), 469–489 (SIIE…TMMF), and 495–512 (IRAF…YLQA). The RING-type; atypical zinc finger occupies 547–586 (CAICYHEFTTSARITPCNHYFHALCLRKWLYIQDTCPMCH). Residues 601-664 (VSNNNGFIPP…AAEEFNDDTD (64 aa)) are disordered. Residues 616 to 628 (EAVREAAAESDRE) are compositionally biased toward basic and acidic residues. Acidic residues predominate over residues 629–639 (LNEDDSTDCDD). The residue at position 634 (Ser634) is a Phosphoserine. Phosphothreonine occurs at positions 635 and 663.

In terms of assembly, interacts with MHC class I and HM13. Interacts with VHL. Component of SCAP-SREBP complex composed of SREBF2, SCAP and RNF139; the complex hampers the interaction between SCAP and SEC24B, thereby reducing SREBF2 proteolytic processing. Interacts with SREBF2 (via C-terminal domain). Interacts with SCAP; the interaction inhibits the interaction of SCAP with SEC24B and hampering the ER to Golgi transport of the SCAP-SREBP complex. Interacts with SEC24B. Interacts with INSIG1 and INSIG2. Interacts with EIF3F and EIF3H; the interaction leads to protein translation inhibitions in a ubiquitination-dependent manner. Interacts with XBP1 isoform 1; the interaction induces ubiquitination and degradation of XBP1 isoform 1. Interacts with AUP1, AMFR and UBE2G2; interaction with AUP1 facilitates interaction of RNF139 with ubiquitin-conjugating enzyme UBE2G2 and ubiquitin ligase AMFR/gp78, leading to sterol-induced ubiquitination of HMGCR and its subsequent proteasomal degradation. Post-translationally, autoubiquitinated. Ubiquitination is induced by sterol and leads to ist degradation via the ubiquitin-proteasome pathway. In terms of tissue distribution, highly expressed in testis, placenta and adrenal gland. Moderate expression in heart, brain, liver, skeletal muscle and pancreas, and low expression in lung and kidney.

The protein localises to the endoplasmic reticulum membrane. The catalysed reaction is S-ubiquitinyl-[E2 ubiquitin-conjugating enzyme]-L-cysteine + [acceptor protein]-L-lysine = [E2 ubiquitin-conjugating enzyme]-L-cysteine + N(6)-ubiquitinyl-[acceptor protein]-L-lysine.. It functions in the pathway protein modification; protein ubiquitination. Functionally, E3-ubiquitin ligase; acts as a negative regulator of cell proliferation through mechanisms involving G2/M arrest and cell death. Required for MHC class I ubiquitination in cells expressing the cytomegalovirus protein US2 before dislocation from the endoplasmic reticulum (ER). Affects SREBP processing by hindering the SREBP-SCAP complex translocation from the ER to the Golgi, thereby reducing SREBF2 target gene expression. Involved in the sterol-accelerated degradation of HMGCR. This is achieved through binding of RNF139 to INSIG1 and/or INSIG2 at the ER membrane. In addition, interaction of RNF139 with AUP1 facilitates interaction of RNF139 with ubiquitin-conjugating enzyme UBE2G2 and ubiquitin ligase AMFR, leading to ubiquitination of HMGCR. The ubiquitinated HMGCR is then released from the ER into the cytosol for subsequent destruction. Required for INSIG1 ubiquitination. May be required for EIF3 complex ubiquitination. The chain is E3 ubiquitin-protein ligase RNF139 from Homo sapiens (Human).